A 583-amino-acid chain; its full sequence is uncharacterized protein (583 aa).

24-140 (ILADIDDEQL…SAMLRAMARM (117 aa)) contributes to the a nucleoside 3',5'-cyclic phosphate binding site. Residues 309–469 (LVMAGGGARG…LNNLPANVMC (161 aa)) form the PNPLA domain. A GXGXXG motif is present at residues 313–318 (GGGARG). The GXSXG signature appears at 340–344 (GTSSG). S342 acts as the Nucleophile in catalysis. D456 acts as the Proton acceptor in catalysis. Residues 456-458 (DGG) carry the DGA/G motif.

This sequence belongs to the NTE family.

This is an uncharacterized protein from Mycobacterium bovis (strain ATCC BAA-935 / AF2122/97).